We begin with the raw amino-acid sequence, 756 residues long: ATP-dependent zinc metalloprotease FtsH (756 aa).

Over M1–S44 the chain is Cytoplasmic. The chain crosses the membrane as a helical span at residues W45–T65. The Extracellular portion of the chain corresponds to Q66 to S148. The chain crosses the membrane as a helical span at residues F149–F169. The Cytoplasmic segment spans residues L170–G756. G241–T248 provides a ligand contact to ATP. H463 lines the Zn(2+) pocket. The active site involves E464. Residues H467 and D539 each coordinate Zn(2+). 2 stretches are compositionally biased toward basic and acidic residues: residues P647–D662 and L672–E681. Residues P647 to G756 are disordered. 2 stretches are compositionally biased toward low complexity: residues A684 to A703 and P713 to A724. Residues G744–G756 are compositionally biased toward polar residues.

The protein in the central section; belongs to the AAA ATPase family. It in the C-terminal section; belongs to the peptidase M41 family. As to quaternary structure, homohexamer. The cofactor is Zn(2+).

It localises to the cell membrane. In terms of biological role, acts as a processive, ATP-dependent zinc metallopeptidase for both cytoplasmic and membrane proteins. Plays a role in the quality control of integral membrane proteins. This chain is ATP-dependent zinc metalloprotease FtsH, found in Rothia mucilaginosa (strain DY-18) (Stomatococcus mucilaginosus).